A 461-amino-acid polypeptide reads, in one-letter code: Siroheme synthase (461 aa).

Residues 1–204 (MDYFPIFCQL…GDTTQAQQQV (204 aa)) form a precorrin-2 dehydrogenase /sirohydrochlorin ferrochelatase region. NAD(+)-binding positions include 22–23 (EV) and 43–44 (GR). Phosphoserine is present on S128. A uroporphyrinogen-III C-methyltransferase region spans residues 216–461 (GEVTLVGAGP…NWFRCEAASA (246 aa)). P225 is a binding site for S-adenosyl-L-methionine. Catalysis depends on D248, which acts as the Proton acceptor. K270 acts as the Proton donor in catalysis. S-adenosyl-L-methionine-binding positions include 301–303 (GGD), I306, 331–332 (TA), M382, and G411.

It in the N-terminal section; belongs to the precorrin-2 dehydrogenase / sirohydrochlorin ferrochelatase family. In the C-terminal section; belongs to the precorrin methyltransferase family.

It carries out the reaction uroporphyrinogen III + 2 S-adenosyl-L-methionine = precorrin-2 + 2 S-adenosyl-L-homocysteine + H(+). The catalysed reaction is precorrin-2 + NAD(+) = sirohydrochlorin + NADH + 2 H(+). The enzyme catalyses siroheme + 2 H(+) = sirohydrochlorin + Fe(2+). The protein operates within cofactor biosynthesis; adenosylcobalamin biosynthesis; precorrin-2 from uroporphyrinogen III: step 1/1. Its pathway is cofactor biosynthesis; adenosylcobalamin biosynthesis; sirohydrochlorin from precorrin-2: step 1/1. It participates in porphyrin-containing compound metabolism; siroheme biosynthesis; precorrin-2 from uroporphyrinogen III: step 1/1. It functions in the pathway porphyrin-containing compound metabolism; siroheme biosynthesis; siroheme from sirohydrochlorin: step 1/1. The protein operates within porphyrin-containing compound metabolism; siroheme biosynthesis; sirohydrochlorin from precorrin-2: step 1/1. Functionally, multifunctional enzyme that catalyzes the SAM-dependent methylations of uroporphyrinogen III at position C-2 and C-7 to form precorrin-2 via precorrin-1. Then it catalyzes the NAD-dependent ring dehydrogenation of precorrin-2 to yield sirohydrochlorin. Finally, it catalyzes the ferrochelation of sirohydrochlorin to yield siroheme. In Edwardsiella ictaluri (strain 93-146), this protein is Siroheme synthase.